Reading from the N-terminus, the 222-residue chain is 2-hydroxy-3-keto-5-methylthiopentenyl-1-phosphate phosphatase (222 aa).

It belongs to the HAD-like hydrolase superfamily. MtnX family.

It catalyses the reaction 2-hydroxy-5-methylsulfanyl-3-oxopent-1-enyl phosphate + H2O = 1,2-dihydroxy-5-(methylsulfanyl)pent-1-en-3-one + phosphate. The protein operates within amino-acid biosynthesis; L-methionine biosynthesis via salvage pathway; L-methionine from S-methyl-5-thio-alpha-D-ribose 1-phosphate: step 4/6. Its function is as follows. Dephosphorylates 2-hydroxy-3-keto-5-methylthiopentenyl-1-phosphate (HK-MTPenyl-1-P) yielding 1,2-dihydroxy-3-keto-5-methylthiopentene (DHK-MTPene). This chain is 2-hydroxy-3-keto-5-methylthiopentenyl-1-phosphate phosphatase, found in Brevibacillus brevis (strain 47 / JCM 6285 / NBRC 100599).